A 981-amino-acid chain; its full sequence is uncharacterized protein (981 aa).

In terms of domain architecture, Carrier spans 535 to 612 (VLLNPVAIEI…SIASIIQKKS (78 aa)). S571 is modified (O-(pantetheine 4'-phosphoryl)serine).

It belongs to the ATP-dependent AMP-binding enzyme family.

This is an uncharacterized protein from Schizosaccharomyces pombe (strain 972 / ATCC 24843) (Fission yeast).